The sequence spans 247 residues: Probable transcriptional regulatory protein Tola_2714 (247 aa).

A disordered region spans residues 1–21 (MAGHSKWANIKHRKAAQDAKR).

The protein belongs to the TACO1 family.

The protein resides in the cytoplasm. This chain is Probable transcriptional regulatory protein Tola_2714, found in Tolumonas auensis (strain DSM 9187 / NBRC 110442 / TA 4).